The chain runs to 729 residues: Anti-bacteriophage protein B (729 aa).

One can recognise a Helicase ATP-binding domain in the interval 109-271; it reads FDLLKSGQNV…KLGYPHTFVS (163 aa). 122–129 is a binding site for ATP; that stretch reads APTSMGKS. The region spanning 297–472 is the Helicase C-terminal domain; it reads ALGEIAHACV…GIDTPINLLA (176 aa).

This sequence belongs to the helicase family. Interacts with AbpB.

Part of an antiviral system composed of AbpA and AbpB; when both are expressed from a plasmid they confer resistance to phages T2, T4, T7 and lambda but not RB32 or RB69. Resistance is temperature dependent, it can be seen at 30 degrees Celsius but not at 37 or 42 degrees Celsius. The system impairs phage but not bacterial DNA synthesis (shown for T4, T7 and lambda). Partially suppressed by mutations in T4 gene 41, a replicative helicase. In terms of biological role, deletion or mutations in this gene were selected in directed evolution experiments for resistance to intense ionizing radiation (3000 Gy). This chain is Anti-bacteriophage protein B, found in Escherichia coli (strain K12).